The primary structure comprises 280 residues: MAKRPALPSADLSPTSGFEAGEGDLFNGADERGFFAEPRSAPKKAARAVTATEQEADAAHYHGHRDRLRTRYRDGGDAALADYELLELLLFRLIPRRDTKPIAKALIARFGTLGSVLGAPLPLLQEVKGVGEAVALDLKLVASVSQRMLKSEIRNKQVLGSWSSVIDYCHAAMAHETREQFRILFLDKRNVLIADEVQGQGTVDHTPVYPREIVRRALELSSTALILIHNHPSGDPTPSRADIEMTKTIIDTAKPLGITVHDHIIIGKDGHASFKGLRLI.

The tract at residues 1-22 is disordered; sequence MAKRPALPSADLSPTSGFEAGE. In terms of domain architecture, MPN spans 158–280; that stretch reads VLGSWSSVID…HASFKGLRLI (123 aa). The Zn(2+) site is built by His229, His231, and Asp242. A JAMM motif motif is present at residues 229 to 242; that stretch reads HNHPSGDPTPSRAD.

It belongs to the UPF0758 family.

The chain is UPF0758 protein Atu1607 from Agrobacterium fabrum (strain C58 / ATCC 33970) (Agrobacterium tumefaciens (strain C58)).